Here is a 280-residue protein sequence, read N- to C-terminus: Energy-coupling factor transporter ATP-binding protein EcfA2 (280 aa).

Residues Ile3–Gly245 form the ABC transporter domain. Gly40 to Ser47 is an ATP binding site.

Belongs to the ABC transporter superfamily. Energy-coupling factor EcfA family. Forms a stable energy-coupling factor (ECF) transporter complex composed of 2 membrane-embedded substrate-binding proteins (S component), 2 ATP-binding proteins (A component) and 2 transmembrane proteins (T component).

It is found in the cell membrane. Functionally, ATP-binding (A) component of a common energy-coupling factor (ECF) ABC-transporter complex. Unlike classic ABC transporters this ECF transporter provides the energy necessary to transport a number of different substrates. The protein is Energy-coupling factor transporter ATP-binding protein EcfA2 of Streptococcus thermophilus (strain CNRZ 1066).